Reading from the N-terminus, the 122-residue chain is RING-box protein 1B (122 aa).

Positions 1–23 (MAEEIEVEETEDFHDMDFNDEEP) are enriched in acidic residues. The disordered stretch occupies residues 1 to 28 (MAEEIEVEETEDFHDMDFNDEEPSCSGG). Cys57, Cys60, Cys68, Cys71, Cys82, Cys89, His91, His94, His96, Cys108, and Asp111 together coordinate Zn(2+). The RING-type zinc finger occupies 57-112 (CAICRNHIMNLCIECQADPNANQDECTVAWGECNHAFHYHCIARWLKTRLVCPLDN).

It belongs to the RING-box family. Part of a SCF complex consisting of Skpa (SKP1), Cul1, Roc1B and a F-box protein. In terms of tissue distribution, highly expressed in early embryos, and in pupae. Widely expressed in adult males, while it is weakly expressed in adult females.

It is found in the cytoplasm. The protein resides in the nucleus. Its pathway is protein modification; protein ubiquitination. Its function is as follows. Component of the SCF (SKP1-CUL1-F-box protein) E3 ubiquitin ligase complex, which mediates the ubiquitination and subsequent proteasomal degradation of target proteins. Through the RING-type zinc finger, seems to recruit the E2 ubiquitination enzyme to the complex and brings it into close proximity to the substrate. This is RING-box protein 1B (Roc1b) from Drosophila melanogaster (Fruit fly).